We begin with the raw amino-acid sequence, 86 residues long: Small ribosomal subunit protein uS17 (86 aa).

This sequence belongs to the universal ribosomal protein uS17 family. In terms of assembly, part of the 30S ribosomal subunit.

One of the primary rRNA binding proteins, it binds specifically to the 5'-end of 16S ribosomal RNA. This Shouchella clausii (strain KSM-K16) (Alkalihalobacillus clausii) protein is Small ribosomal subunit protein uS17.